The primary structure comprises 124 residues: Galanin peptides (124 aa).

The signal sequence occupies residues 1 to 19 (MARGSVILLGWLLLVVTLS). Positions 20–30 (ATLGLGMPAKE) are excised as a propeptide. At threonine 61 the chain carries Threonine amide. Phosphoserine is present on residues serine 117 and serine 118.

It belongs to the galanin family. Expressed in retinal progenitor cells and retinal ganglion cells (at protein level).

It is found in the secreted. Functionally, endocrine hormone of the central and peripheral nervous systems that binds and activates the G protein-coupled receptors GALR1, GALR2, and GALR3. This small neuropeptide may regulate diverse physiologic functions including contraction of smooth muscle of the gastrointestinal and genitourinary tract, growth hormone and insulin release and adrenal secretion. This is Galanin peptides (Gal) from Mus musculus (Mouse).